The following is an 897-amino-acid chain: MGMATYAVVDLETTGNQLDFDDIIQIGITFVRNNQIIDTYHSMIRTNLEIPPFIQALTSIEENMLQQAPYFNQVAQEIYDKIKDCIFVAHNVDFDLNFIKKAFKDCNIQYRPKKVIDTLEIFKIAFPTDKSYQLSELAEAHGITLANAHRADEDAATTAKLMILAFEKFEKLPLDTLKQLYYLSKQLKYDLYDIFFEMVRQYDAKPLDKSYEKFEQIIYRKQVDFKKPTTNYNGSLKSLYSKAVDQLGLTYRPQQLYLAETILDQLMHSEKAMIEASLGSGKSLAYLLAALMYNIETGKHVMISTNTKLLQSQLLEKDIPAMNEALNFKINALLIKSKSDYISLGLISQILKDDTSNYEVNILKMQLLIWITETPSGDIQELNLKGGQKMYFDQKIETYVPARHDVHYYNFIKRNAQNIQIGITNHAHLIHSDVENSIYQLFDDCIVDEAHRLPDYALNQVTNELSYADIKYQLGLIGKNENEKLLKAIDQLEKQRILEKLDIAPIDIFGLKASMNEIHELNEQLFSTIFTIINDSDVYDDDIHRFHNVFTFETKDILKDLHAIIDKLNKTLEIFNGISHKTVKSLRKQLLYLKDKFKNIEQSLKAGHTSFISIKNLSQKSTIRLYVKDYAVKDVLTKQVLEKFKSLIFISGTLKFNHSFEAFKQLFNKDVHFNTFEVNTSLQSAKNTSVFIPSDVASYQYKNIDEYVASIVSYIIEYTTITSSKCLVLFTSYKMMHMVQDMLNELPEFEDYVVLTQQQNQNYKIVQQFNNFDKAILLGTSTFFEGFDFQANGIKCVMIAKLPFMNKHNAKYWLMDSEFTSTFKEYVLPDAVTRFRQGLGRLIRNENDRGIIVSFDDRLINSNYKNFFEQTLENYRQKKGDIQQFGKLLRQIQKKKK.

Positions 8–161 (VVDLETTGNQ…DEDAATTAKL (154 aa)) constitute an Exonuclease domain. In terms of domain architecture, Helicase ATP-binding spans 241-496 (SKAVDQLGLT…KAIDQLEKQR (256 aa)). Position 276–283 (276–283 (ASLGSGKS)) interacts with ATP. The DEAH box motif lies at 448–451 (DEAH). Residues 703–893 (NIDEYVASIV…QFGKLLRQIQ (191 aa)) form the Helicase C-terminal domain.

Belongs to the helicase family. DinG subfamily. Type 2 sub-subfamily.

Functionally, 3'-5' exonuclease. The protein is 3'-5' exonuclease DinG of Staphylococcus aureus (strain USA300).